The chain runs to 505 residues: MDLLLLEKTLLALFIAATIAITISKLRGKRFKLPPGPIPVPVFGNWLQVGDDLNHRNLTDLAKRFGDIFLLRMGQRNLVVVSSPELAKEVLHTQGVEFGSRTRNVVFDIFTGKGQDMVFTVYGTLAEMRRIMTVPFFTNKVVQQYRFGWEFEAQSVVDDVKKNPEACSSGIVLRRRLQLMMYNIMYRIMFDRRFESEEDPLFVKLKALNGERSRLAQSFEYNYGDFIPILRPFLKGYLKLCKEVKDRRLQLFKDYFVDERKKLGSTKSTTNEGLKCAIDHILDAQQKGEINDDNVLYIVENINVAAIETTLWSIEWGIAELVNHQKIQNKVREEIDRVLGPGHQVTEPDLQKLPYLQAVIKETLRLRMAIPLLVPHMNLHDAKLSGFDIPAESKILVNAWWLANNPAQWKKPEEFRPERFLEEESHVEANGNDFRYLPFGVGRRSCPGIILALPILGITLGRLVQNFELLPPPGQSKIDTAEKGGQFSLHILKHSTIVCKPRSFN.

The helical transmembrane segment at 3–23 (LLLLEKTLLALFIAATIAITI) threads the bilayer. Residues 212-217 (RSRLAQ) and A305 contribute to the (E)-cinnamate site. Residue C446 participates in heme binding.

It belongs to the cytochrome P450 family. It depends on heme as a cofactor.

It is found in the membrane. It carries out the reaction (E)-cinnamate + reduced [NADPH--hemoprotein reductase] + O2 = (E)-4-coumarate + oxidized [NADPH--hemoprotein reductase] + H2O + H(+). It functions in the pathway phenylpropanoid metabolism; trans-4-coumarate biosynthesis; trans-4-coumarate from trans-cinnamate: step 1/1. Its function is as follows. Catalyzes the first oxidative step of the phenylpropanoid pathway in higher plants by transforming trans-cinnamate into p-coumarate. The compounds formed by this pathway are essential components for lignification, pollination, and defense against ultraviolet light, predators and pathogens. In Cicer arietinum (Chickpea), this protein is Trans-cinnamate 4-monooxygenase (CYP73A19).